Reading from the N-terminus, the 329-residue chain is Beta-ketoacyl-[acyl-carrier-protein] synthase III (329 aa).

Catalysis depends on residues C123 and H256. Positions 257-261 are ACP-binding; it reads QANIR. Residue N286 is part of the active site.

The protein belongs to the thiolase-like superfamily. FabH family. In terms of assembly, homodimer.

It localises to the cytoplasm. The catalysed reaction is malonyl-[ACP] + acetyl-CoA + H(+) = 3-oxobutanoyl-[ACP] + CO2 + CoA. Its pathway is lipid metabolism; fatty acid biosynthesis. Catalyzes the condensation reaction of fatty acid synthesis by the addition to an acyl acceptor of two carbons from malonyl-ACP. Catalyzes the first condensation reaction which initiates fatty acid synthesis and may therefore play a role in governing the total rate of fatty acid production. Possesses both acetoacetyl-ACP synthase and acetyl transacylase activities. Its substrate specificity determines the biosynthesis of branched-chain and/or straight-chain of fatty acids. The chain is Beta-ketoacyl-[acyl-carrier-protein] synthase III from Burkholderia lata (strain ATCC 17760 / DSM 23089 / LMG 22485 / NCIMB 9086 / R18194 / 383).